Consider the following 151-residue polypeptide: Ribonuclease H (151 aa).

The region spanning 1–143 is the RNase H type-1 domain; sequence MEEYVIYTDG…VDRVARKEAA (143 aa). Residues D9, E48, D71, and D135 each coordinate Mg(2+).

The protein belongs to the RNase H family. Monomer. It depends on Mg(2+) as a cofactor.

The protein localises to the cytoplasm. It carries out the reaction Endonucleolytic cleavage to 5'-phosphomonoester.. Functionally, endonuclease that specifically degrades the RNA of RNA-DNA hybrids. The sequence is that of Ribonuclease H from Neorickettsia sennetsu (strain ATCC VR-367 / Miyayama) (Ehrlichia sennetsu).